The chain runs to 358 residues: 3-dehydroquinate synthase (358 aa).

NAD(+)-binding positions include serine 75–lysine 80, glycine 109–aspartate 113, threonine 133–threonine 134, lysine 146, and lysine 155. 3 residues coordinate Zn(2+): glutamate 188, histidine 245, and histidine 262.

Belongs to the sugar phosphate cyclases superfamily. Dehydroquinate synthase family. Co(2+) is required as a cofactor. Zn(2+) serves as cofactor. The cofactor is NAD(+).

It localises to the cytoplasm. The enzyme catalyses 7-phospho-2-dehydro-3-deoxy-D-arabino-heptonate = 3-dehydroquinate + phosphate. Its pathway is metabolic intermediate biosynthesis; chorismate biosynthesis; chorismate from D-erythrose 4-phosphate and phosphoenolpyruvate: step 2/7. Functionally, catalyzes the conversion of 3-deoxy-D-arabino-heptulosonate 7-phosphate (DAHP) to dehydroquinate (DHQ). The chain is 3-dehydroquinate synthase from Methylacidiphilum infernorum (isolate V4) (Methylokorus infernorum (strain V4)).